The primary structure comprises 1476 residues: Glucosyltransferase-I (1476 aa).

The N-terminal stretch at 1-34 (MDKKVRYKLRKVKKRWVTVSVASAVMTLTTLSGG) is a signal peptide. Disordered stretches follow at residues 42–89 (ESKS…ISSS) and 102–141 (PYTVGETASNGEKLQNQTTTVDKTSEAAANNISKQTTEAD). Polar residues-rich tracts occupy residues 43-81 (SKSQISNDSNTSVVTANEESNVTTEVTSKQEAASSQTNH) and 102-139 (PYTVGETASNGEKLQNQTTTVDKTSEAAANNISKQTTE). Cell wall-binding repeat units lie at residues 159 to 178 (LPNVKEIDGKYYYYDNNGKV) and 179 to 199 (RTNFTLIADGKILHFDETGAY). Residues 200-1051 (TDTSIDTVNK…NTYFNISDNK (852 aa)) are catalytic; approximate. Cell wall-binding repeat units lie at residues 1087–1106 (KNTFISEGDKWYYFDNNGYM), 1107–1126 (VTGAQSINGVNYYFLSNGLQ), 1170–1189 (SVGLTVIDGQVQYFDEMGYQ), 1214–1234 (RNRFIENEEGKWLYLGEDGAA), 1235–1254 (VTGSQTINGQHLYFRANGVQ), 1279–1299 (RNRFVRNAQGQWFYFDNNGYA), 1300–1319 (VTGARTINGQHLYFRANGVQ), 1344–1364 (RNRFVRNAQGQWFYFDNNGYA), 1365–1384 (VTGARTINGQHLYFRANGVQ), 1409–1429 (RNRFVRNAQGQWFYFDNNGYA), and 1430–1449 (VTGARTINGQHLYFRANGVQ).

It belongs to the glycosyl hydrolase 70 family.

It is found in the secreted. The enzyme catalyses [(1-&gt;6)-alpha-D-glucosyl](n) + sucrose = [(1-&gt;6)-alpha-D-glucosyl](n+1) + D-fructose. Its function is as follows. Production of extracellular glucans, that are thought to play a key role in the development of the dental plaque because of their ability to adhere to smooth surfaces and mediate the aggregation of bacterial cells and food debris. The polypeptide is Glucosyltransferase-I (gtfB) (Streptococcus mutans serotype c (strain ATCC 700610 / UA159)).